We begin with the raw amino-acid sequence, 264 residues long: uncharacterized protein (264 aa).

6 helical membrane-spanning segments follow: residues 23 to 43, 59 to 79, 91 to 111, 150 to 170, 190 to 210, and 233 to 253; these read LIFLAPFSLFTQIFMVITALI, FDTFTYQSNSLAIFLVWYYFL, LVLSVTGYLVFTVIFFNFYAL, FSELLLHVIHPLFYFIYVGLL, AGIYPSIYAFYLQTIPFLNVW, and WIWSIPIFASMFLILWMLFVI.

The protein resides in the cell membrane. This is an uncharacterized protein from Mycoplasma genitalium (strain ATCC 33530 / DSM 19775 / NCTC 10195 / G37) (Mycoplasmoides genitalium).